The following is a 395-amino-acid chain: Inactive serine protease 54 (395 aa).

The N-terminal stretch at 1–30 (MVSAAGLSGDGKMRGVLLVLLGLLYSSTSC) is a signal peptide. One can recognise a Peptidase S1 domain in the interval 37 to 269 (VFYGPDPKEG…YSKWITSKAE (233 aa)). Asn-123 is a glycosylation site (N-linked (GlcNAc...) asparagine). 3 disulfides stabilise this stretch: Cys-164–Cys-227, Cys-195–Cys-205, and Cys-217–Cys-248. A disordered region spans residues 324 to 348 (RLGNSSRDSLDVREKDVKESGRSPE). N-linked (GlcNAc...) asparagine glycosylation occurs at Asn-327. The segment covering 331–345 (DSLDVREKDVKESGR) has biased composition (basic and acidic residues).

The protein belongs to the peptidase S1 family. Plasma kallikrein subfamily.

The protein resides in the secreted. The chain is Inactive serine protease 54 (PRSS54) from Homo sapiens (Human).